Here is a 141-residue protein sequence, read N- to C-terminus: Probable spanin, inner membrane subunit (141 aa).

Residues 1 to 17 (MSRLMIVLVVLLSLAVA) form a helical; Signal-anchor for type II membrane protein membrane-spanning segment. The Periplasmic portion of the chain corresponds to 18-141 (GLFLVKHKNA…ESEPLPDAGQ (124 aa)). The segment at 119 to 141 (ACTDASDCPQRMPESEPLPDAGQ) is disordered.

As to quaternary structure, interacts (via C-terminus) with the spanin outer lipoprotein subunit (via C-terminus). Part of the spanin complex which spans the entire periplasmic space. The spanin complex is composed of spanin inner membrane subunit and spanin outer membrane subunit.

The protein localises to the host cell inner membrane. Functionally, component of the spanin complex that disrupts the host outer membrane and participates in cell lysis during virus exit. The spanin complex conducts the final step in host lysis by disrupting the outer membrane after holin and endolysin action have permeabilized the inner membrane and degraded the host peptidoglycans. Host outer membrane disruption is possibly due to local fusion between the inner and outer membrane performed by the spanin complex. This Escherichia phage P2 (Bacteriophage P2) protein is Probable spanin, inner membrane subunit (lysB).